The primary structure comprises 525 residues: GMP synthase [glutamine-hydrolyzing] (525 aa).

A Glutamine amidotransferase type-1 domain is found at 9 to 207 (RILILDFGSQ…VRDICQCEAL (199 aa)). The active-site Nucleophile is the Cys-86. Catalysis depends on residues His-181 and Glu-183. Residues 208–400 (WTPAKIIDDA…LGLPYDMLYR (193 aa)) form the GMPS ATP-PPase domain. Position 235–241 (235–241 (SGGVDSS)) interacts with ATP.

As to quaternary structure, homodimer.

It catalyses the reaction XMP + L-glutamine + ATP + H2O = GMP + L-glutamate + AMP + diphosphate + 2 H(+). It participates in purine metabolism; GMP biosynthesis; GMP from XMP (L-Gln route): step 1/1. In terms of biological role, catalyzes the synthesis of GMP from XMP. The chain is GMP synthase [glutamine-hydrolyzing] from Shigella dysenteriae serotype 1 (strain Sd197).